We begin with the raw amino-acid sequence, 410 residues long: Mating-type locus allele B7 protein (410 aa).

The segment at 1–110 (MSSDPNFSLT…VNVGSPAVGC (110 aa)) is variable domain between B alleles. Residues 107 to 184 (AVGCRNLSED…NARRRSGWSH (78 aa)) constitute a DNA-binding region (homeobox; TALE-type). The highly conserved between B alleles stretch occupies residues 111 to 410 (RNLSEDLPAY…PFLCLSVAFV (300 aa)). Disordered regions lie at residues 202–225 (RAKL…SNNL), 278–336 (TPKP…PELS), and 374–394 (ARGN…QPDE). A Nuclear localization signal motif is present at residues 276 to 308 (KKTPKPGMPRPVTTVAKRQPARKTKPAAKPNSR). Residues 306–336 (NSRTANPRASTTPSIDSTLDSSKLESTPELS) are compositionally biased toward polar residues. Positions 333–410 (PELSMCSTAD…PFLCLSVAFV (78 aa)) are not essential for B7 function. Over residues 375 to 388 (RGNRKVKALPKRAG) the composition is skewed to basic residues.

The protein belongs to the TALE/M-ATYP homeobox family.

The protein localises to the nucleus. In terms of biological role, the B locus has at least 25 alleles, and any combination of two different B alleles yields a multimeric regulatory protein, that activates genes responsible for the pathogenicity and for the sexual development of the fungus within the corn plant. This Mycosarcoma maydis (Corn smut fungus) protein is Mating-type locus allele B7 protein.